A 384-amino-acid polypeptide reads, in one-letter code: S-adenosylmethionine synthase (384 aa).

H15 provides a ligand contact to ATP. D17 serves as a coordination point for Mg(2+). Position 43 (E43) interacts with K(+). 2 residues coordinate L-methionine: E56 and Q99. The segment at 99-109 is flexible loop; sequence QSPDINQGVDR. ATP-binding positions include 164 to 166, 231 to 232, D240, 246 to 247, A263, and K267; these read DAK, RF, and RK. D240 contacts L-methionine. K271 contributes to the L-methionine binding site.

This sequence belongs to the AdoMet synthase family. Homotetramer; dimer of dimers. Mg(2+) is required as a cofactor. The cofactor is K(+).

It localises to the cytoplasm. It catalyses the reaction L-methionine + ATP + H2O = S-adenosyl-L-methionine + phosphate + diphosphate. It participates in amino-acid biosynthesis; S-adenosyl-L-methionine biosynthesis; S-adenosyl-L-methionine from L-methionine: step 1/1. Its function is as follows. Catalyzes the formation of S-adenosylmethionine (AdoMet) from methionine and ATP. The overall synthetic reaction is composed of two sequential steps, AdoMet formation and the subsequent tripolyphosphate hydrolysis which occurs prior to release of AdoMet from the enzyme. This Shewanella halifaxensis (strain HAW-EB4) protein is S-adenosylmethionine synthase.